A 376-amino-acid chain; its full sequence is N-acetyldiaminopimelate deacetylase (376 aa).

Residue D69 is part of the active site. Catalysis depends on E128, which acts as the Proton acceptor.

The protein belongs to the peptidase M20A family. N-acetyldiaminopimelate deacetylase subfamily.

It catalyses the reaction N-acetyl-(2S,6S)-2,6-diaminopimelate + H2O = (2S,6S)-2,6-diaminopimelate + acetate. Its pathway is amino-acid biosynthesis; L-lysine biosynthesis via DAP pathway; LL-2,6-diaminopimelate from (S)-tetrahydrodipicolinate (acetylase route): step 3/3. Its function is as follows. Catalyzes the conversion of N-acetyl-diaminopimelate to diaminopimelate and acetate. This Streptococcus pneumoniae (strain Hungary19A-6) protein is N-acetyldiaminopimelate deacetylase.